Here is a 183-residue protein sequence, read N- to C-terminus: Beta-defensin 129 (183 aa).

The N-terminal stretch at 1–19 (MKLLFPIFASLMLQYQVNT) is a signal peptide. 3 cysteine pairs are disulfide-bonded: Cys27-Cys53, Cys34-Cys48, and Cys38-Cys54. Residues 141-183 (TATSTKSNTKESRDSATASPPPAPPPPNILPTPSLELEEAEEQ) are disordered. Residues 159 to 170 (SPPPAPPPPNIL) are compositionally biased toward pro residues.

It belongs to the beta-defensin family.

It is found in the secreted. Functionally, has antibacterial activity. The chain is Beta-defensin 129 (DEFB129) from Pan troglodytes (Chimpanzee).